The primary structure comprises 224 residues: 7-cyano-7-deazaguanine synthase (224 aa).

12–22 (LSGGLDSSTVT) contributes to the ATP binding site. Zn(2+) contacts are provided by Cys-193, Cys-201, Cys-204, and Cys-207.

It belongs to the QueC family. It depends on Zn(2+) as a cofactor.

The enzyme catalyses 7-carboxy-7-deazaguanine + NH4(+) + ATP = 7-cyano-7-deazaguanine + ADP + phosphate + H2O + H(+). It participates in purine metabolism; 7-cyano-7-deazaguanine biosynthesis. In terms of biological role, catalyzes the ATP-dependent conversion of 7-carboxy-7-deazaguanine (CDG) to 7-cyano-7-deazaguanine (preQ(0)). This is 7-cyano-7-deazaguanine synthase from Prochlorococcus marinus (strain MIT 9215).